Reading from the N-terminus, the 128-residue chain is Small ribosomal subunit protein uS12 (128 aa).

A disordered region spans residues 1 to 24 (MPTFNQLVKYGREKRKKKSKAPAL). Residue Asp-89 is modified to 3-methylthioaspartic acid. Residues 105–128 (AGVEGRRQSRSKYGTKRPKEEKGG) are disordered.

This sequence belongs to the universal ribosomal protein uS12 family. In terms of assembly, part of the 30S ribosomal subunit. Contacts proteins S8 and S17. May interact with IF1 in the 30S initiation complex.

Its function is as follows. With S4 and S5 plays an important role in translational accuracy. Interacts with and stabilizes bases of the 16S rRNA that are involved in tRNA selection in the A site and with the mRNA backbone. Located at the interface of the 30S and 50S subunits, it traverses the body of the 30S subunit contacting proteins on the other side and probably holding the rRNA structure together. The combined cluster of proteins S8, S12 and S17 appears to hold together the shoulder and platform of the 30S subunit. In Aquifex aeolicus (strain VF5), this protein is Small ribosomal subunit protein uS12.